Consider the following 235-residue polypeptide: Small ribosomal subunit protein uS2 (235 aa).

Belongs to the universal ribosomal protein uS2 family.

The polypeptide is Small ribosomal subunit protein uS2 (Thermoanaerobacter pseudethanolicus (strain ATCC 33223 / 39E) (Clostridium thermohydrosulfuricum)).